The chain runs to 702 residues: 1,4-alpha-glucan-branching enzyme (702 aa).

An N-acetylalanine modification is found at Ala2. Residues 62 to 63 (NE) and 91 to 93 (WAP) each bind substrate. Trp107 is a (1,4-alpha-D-glucosyl)n binding site. Residue 118–121 (DYGK) participates in substrate binding. Lys143 lines the (1,4-alpha-D-glucosyl)n pocket. The residue at position 173 (Tyr173) is a Phosphotyrosine. 333-336 (EILR) contacts substrate. The active-site Nucleophile is the Asp357. The active-site Proton donor is the Glu412.

Belongs to the glycosyl hydrolase 13 family. GlgB subfamily. In terms of assembly, monomer.

The enzyme catalyses Transfers a segment of a (1-&gt;4)-alpha-D-glucan chain to a primary hydroxy group in a similar glucan chain.. It participates in glycan biosynthesis; glycogen biosynthesis. Glycogen-branching enzyme participates in the glycogen biosynthetic process along with glycogenin and glycogen synthase. Generates alpha-1,6-glucosidic branches from alpha-1,4-linked glucose chains, to increase solubility of the glycogen polymer. The chain is 1,4-alpha-glucan-branching enzyme (GBE1) from Homo sapiens (Human).